The primary structure comprises 1369 residues: DNA-directed RNA polymerase subunit beta (1369 aa).

Belongs to the RNA polymerase beta chain family. As to quaternary structure, the RNAP catalytic core consists of 2 alpha, 1 beta, 1 beta' and 1 omega subunit. When a sigma factor is associated with the core the holoenzyme is formed, which can initiate transcription.

The enzyme catalyses RNA(n) + a ribonucleoside 5'-triphosphate = RNA(n+1) + diphosphate. In terms of biological role, DNA-dependent RNA polymerase catalyzes the transcription of DNA into RNA using the four ribonucleoside triphosphates as substrates. This Solidesulfovibrio magneticus (strain ATCC 700980 / DSM 13731 / RS-1) (Desulfovibrio magneticus) protein is DNA-directed RNA polymerase subunit beta.